The following is a 468-amino-acid chain: 6-phosphogluconate dehydrogenase, decarboxylating (468 aa).

NADP(+) is bound by residues 9 to 14 (GLAVMG), 32 to 34 (NRS), 73 to 75 (VKA), and N101. Substrate is bound by residues N101 and 127 to 129 (SGG). Residue K182 is the Proton acceptor of the active site. Position 185–186 (185–186 (HN)) interacts with substrate. Catalysis depends on E189, which acts as the Proton donor. Y190, K259, R286, R444, and H450 together coordinate substrate.

It belongs to the 6-phosphogluconate dehydrogenase family. In terms of assembly, homodimer.

It carries out the reaction 6-phospho-D-gluconate + NADP(+) = D-ribulose 5-phosphate + CO2 + NADPH. It functions in the pathway carbohydrate degradation; pentose phosphate pathway; D-ribulose 5-phosphate from D-glucose 6-phosphate (oxidative stage): step 3/3. Its function is as follows. Catalyzes the oxidative decarboxylation of 6-phosphogluconate to ribulose 5-phosphate and CO(2), with concomitant reduction of NADP to NADPH. This chain is 6-phosphogluconate dehydrogenase, decarboxylating (gnd), found in Staphylococcus epidermidis (strain ATCC 35984 / DSM 28319 / BCRC 17069 / CCUG 31568 / BM 3577 / RP62A).